The chain runs to 189 residues: GMP synthase [glutamine-hydrolyzing] subunit A (189 aa).

Positions 5-189 constitute a Glutamine amidotransferase type-1 domain; the sequence is KIIVINNYGQ…MNFFKVCEDY (185 aa). Residue Cys-79 is the Nucleophile of the active site. Catalysis depends on residues His-166 and Glu-168.

In terms of assembly, heterodimer composed of a glutamine amidotransferase subunit (A) and a GMP-binding subunit (B).

It carries out the reaction XMP + L-glutamine + ATP + H2O = GMP + L-glutamate + AMP + diphosphate + 2 H(+). The protein operates within purine metabolism; GMP biosynthesis; GMP from XMP (L-Gln route): step 1/1. In terms of biological role, catalyzes the synthesis of GMP from XMP. The polypeptide is GMP synthase [glutamine-hydrolyzing] subunit A (Methanococcoides burtonii (strain DSM 6242 / NBRC 107633 / OCM 468 / ACE-M)).